We begin with the raw amino-acid sequence, 421 residues long: Subtilisin-like protease 2 (421 aa).

Residues 1–16 (MQLLNFGLLLLPFVAG) form the signal peptide. Positions 17–122 (DLAPQPEPLL…VHPDQHVYLA (106 aa)) are excised as a propeptide. An Inhibitor I9 domain is found at 36-122 (QYIVTLKEGL…VHPDQHVYLA (87 aa)). Residues 131–421 (RWGLGYMSSK…ERKFTLPKYY (291 aa)) form the Peptidase S8 domain. Residues D169 and H201 each act as charge relay system in the active site. N-linked (GlcNAc...) asparagine glycosylation is found at N248, N261, and N348. Residue S357 is the Charge relay system of the active site. N-linked (GlcNAc...) asparagine glycosylation is present at N388.

The protein belongs to the peptidase S8 family.

It is found in the secreted. Its function is as follows. Secreted subtilisin-like serine protease with keratinolytic activity that contributes to pathogenicity. This chain is Subtilisin-like protease 2 (SUB2), found in Trichophyton verrucosum (strain HKI 0517).